An 802-amino-acid polypeptide reads, in one-letter code: Oligophrenin-1 (802 aa).

The 104-residue stretch at 265-368 (QPTIEGYLYT…WMEAMDGKEP (104 aa)) folds into the PH domain. Positions 380–564 (MELNEVGFKF…ILIEHFGKIY (185 aa)) constitute a Rho-GAP domain. Disordered regions lie at residues 569–588 (EESAAPPVPPPRVTARRHKP), 607–666 (LDES…EPCP), 680–770 (GGTK…NAGE), and 783–802 (FETASRKTGSSQGRLPGDES). Positions 616–627 (HQTPNGTITSSI) are enriched in polar residues. Positions 716 to 732 (HHKEGDADSFSKVRPPG) are enriched in basic and acidic residues.

In terms of assembly, interacts with HOMER1. Interacts with AMPA receptor complexes. Interacts with SH3GL2 (endophilin-A1). Interacts (via C-terminus) with NR1D1. As to expression, expressed in brain.

Its subcellular location is the postsynapse. The protein localises to the presynapse. It is found in the cell projection. The protein resides in the axon. It localises to the dendritic spine. Its subcellular location is the dendrite. The protein localises to the cytoplasm. Functionally, stimulates GTP hydrolysis of members of the Rho family. Its action on RHOA activity and signaling is implicated in growth and stabilization of dendritic spines, and therefore in synaptic function. Critical for the stabilization of AMPA receptors at postsynaptic sites. Critical for the regulation of synaptic vesicle endocytosis at presynaptic terminals. Required for the localization of NR1D1 to dendrites, can suppress its repressor activity and protect it from proteasomal degradation. This Homo sapiens (Human) protein is Oligophrenin-1 (OPHN1).